The sequence spans 151 residues: Large ribosomal subunit protein uL15 (151 aa).

The disordered stretch occupies residues 1 to 58 (MTSISLDSLKPNKGARKRKTRKGRGIAAGQGASCGFGMRGQKSRSGRPTRPGFEGGQM). The segment covering 13–24 (KGARKRKTRKGR) has biased composition (basic residues). Positions 26–38 (IAAGQGASCGFGM) are enriched in gly residues.

Belongs to the universal ribosomal protein uL15 family. Part of the 50S ribosomal subunit.

In terms of biological role, binds to the 23S rRNA. The protein is Large ribosomal subunit protein uL15 of Prochlorococcus marinus (strain SARG / CCMP1375 / SS120).